The following is an 802-amino-acid chain: MKMKWLISVIILFVFIFPQNLVFAGEDKNEGVKVVRDNFGVPHLYAKNKKDLYEAYGYVMAKDRLFQLEMFRRGNEGTVSEIFGEDYLSKDEQSRRDGYSNKEIKKMIDGLDRQPRELIAKFAEGISRYVNEALKDPDDKLSKEFHEYQFLPQKWTSTDVVRVYMVSMTYLWIITRELKNAEILAKLEHEYGTEVSRKMFDDLVWKNDPSAPTSIVSEGKPKRESSSQSLQKLSSAVIKASEKVGKERENFVQSSEELGLPLKIGSNAAIVGSEKSATGNALLFSGPQVGFVAPGFLYEVGLHAPGFDMEGSGFIGYPFIMFGANNHFALSATAGYGNVTDIFEEKLNTKNSSQYLYKGKWRDMEKRKESFTVKGDNGEKKTVEKIYYRTVHGPVISRDETNKVAYSKYVSFRGTEAQSMSAYMKANWAKNLKEFENAASEYTMSLNWYYADKKGDIAYYHVGRYPVRNNKIDERIPTPGTGEYEWKGFIPFKENPHVINPKNGYVVNWNNKPSKEWVNGEYSYYWGEDNRVQQYINGMEARGKVTLEDINEINYTASFAQLRANLFKPLLIDVLDKNKSTNGNYTYLIEKLEEWNNLKEDENKDGYYDAGIAAFFDEWWNNLHDKLFMDELGDFYGITKEITDHRYGASLAYKNISKESTNYKWVNVDQEKIIMESTNEVLAKLQSEKGLKAEKWRMPIKTMTFGEKSLIGIPHGYGSMTPIIEMNRGSENHYIEMTPKGPSGFNITPPGQIGFVKKDGTISDHYDDQLVMFAEWKFKPYLFNKKDIYKAATNVSALNMSK.

The N-terminal stretch at 1-26 is a signal peptide; the sequence is MKMKWLISVIILFVFIFPQNLVFAGE. Glutamate 177 contributes to the Ca(2+) binding site. A propeptide spans 235 to 265 (spacer peptide); that stretch reads SAVIKASEKVGKERENFVQSSEELGLPLKIG. Serine 266 functions as the Nucleophile in the catalytic mechanism. Residue aspartate 341 participates in Ca(2+) binding.

It belongs to the peptidase S45 family. As to quaternary structure, heterodimer of an alpha subunit and a beta subunit processed from the same precursor. Requires Ca(2+) as cofactor.

It localises to the secreted. It catalyses the reaction a penicillin + H2O = 6-aminopenicillanate + a carboxylate. The polypeptide is Penicillin G acylase (pac) (Rhizobium viscosum (Arthrobacter viscosus)).